Consider the following 514-residue polypeptide: RNA-binding region-containing protein 3 (514 aa).

The disordered stretch occupies residues 1–26 (MAGPEPPMPLSRGGPGSASLSPPRGD). A Phosphoserine modification is found at S21. The RRM 1 domain maps to 27–102 (RTLLVRHLPA…HTLVVEFAKE (76 aa)). Disordered stretches follow at residues 106 to 133 (VHSP…EKKE), 213 to 282 (MPLH…VRKK), and 337 to 363 (ETQP…FGKI). A Phosphoserine modification is found at S108. Residues 115-133 (TEKKKRLDDTVENDKEKKE) are compositionally biased toward basic and acidic residues. Residues 217–230 (APLPPTSPQPPEEP) show a composition bias toward pro residues. Phosphoserine is present on S349. The RRM 2 domain maps to 418–501 (CRIYVKNLAR…KPMVVQFARS (84 aa)).

Component of the U11/U12 snRNPs that are part of the U12-type spliceosome. Found in a complex with m(7)G-capped U12 snRNA. Interacts with PDCD7.

The protein localises to the nucleus. Functionally, participates in pre-mRNA U12-dependent splicing, performed by the minor spliceosome which removes U12-type introns. U12-type introns comprises less than 1% of all non-coding sequences. Binds to the 3'-stem-loop of m(7)G-capped U12 snRNA. The chain is RNA-binding region-containing protein 3 (Rnpc3) from Mus musculus (Mouse).